Reading from the N-terminus, the 833-residue chain is Leucine--tRNA ligase (833 aa).

The short motif at 41 to 52 is the 'HIGH' region element; the sequence is PYPSGAGLHVGH. Positions 610 to 614 match the 'KMSKS' region motif; the sequence is KMSKS. Lysine 613 contacts ATP.

It belongs to the class-I aminoacyl-tRNA synthetase family.

Its subcellular location is the cytoplasm. It catalyses the reaction tRNA(Leu) + L-leucine + ATP = L-leucyl-tRNA(Leu) + AMP + diphosphate. This Streptococcus mutans serotype c (strain ATCC 700610 / UA159) protein is Leucine--tRNA ligase.